A 1469-amino-acid chain; its full sequence is uncharacterized protein (1469 aa).

Over residues 146-180 (GDHITPKEEEEKEKEKEKEKEKEKEKEKEKEKDSE) the composition is skewed to basic and acidic residues. Disordered stretches follow at residues 146-186 (GDHI…LQEQ), 231-255 (IQNN…DNNN), 306-344 (TTTT…GGDS), 430-455 (LNFN…PYHY), 520-560 (PVKN…NNNS), 654-706 (TTTT…PLVR), 719-755 (RTQT…VKNQ), 881-958 (YNNI…NIIN), and 1329-1369 (NCSS…NSSN). Composition is skewed to low complexity over residues 232 to 241 (QNNQNNQNNN), 306 to 327 (TTTT…ISNT), 430 to 449 (LNFN…NNNN), 523 to 559 (NNNN…INNN), and 654 to 693 (TTTT…TTTP). Positions 719-731 (RTQTQLQTKIQPK) are enriched in polar residues. Over residues 732–749 (SPQPQPTAAPEPQKPPTP) the composition is skewed to pro residues. Low complexity-rich tracts occupy residues 1329–1347 (NCSS…SGSE) and 1354–1369 (RSNT…NSSN).

This is an uncharacterized protein from Dictyostelium discoideum (Social amoeba).